The sequence spans 503 residues: Cardiolipin synthase (503 aa).

3 consecutive transmembrane segments (helical) span residues 5-25, 30-50, and 59-79; these read LNVL…RGFL, VGTL…IIFF, and LTWL…YLMF. PLD phosphodiesterase domains lie at 238 to 265 and 416 to 443; these read INYR…GDEY and NRGF…DMRS. Catalysis depends on residues His-243, Lys-245, Asp-250, His-421, Lys-423, and Asp-428.

It belongs to the phospholipase D family. Cardiolipin synthase subfamily.

It is found in the cell membrane. The catalysed reaction is 2 a 1,2-diacyl-sn-glycero-3-phospho-(1'-sn-glycerol) = a cardiolipin + glycerol. In terms of biological role, catalyzes the reversible phosphatidyl group transfer from one phosphatidylglycerol molecule to another to form cardiolipin (CL) (diphosphatidylglycerol) and glycerol. In Alkalihalophilus pseudofirmus (strain ATCC BAA-2126 / JCM 17055 / OF4) (Bacillus pseudofirmus), this protein is Cardiolipin synthase (cls).